Consider the following 256-residue polypeptide: Low molecular mass lipoprotein 3 (256 aa).

An N-terminal signal peptide occupies residues 1–17; that stretch reads MKPAIVILCLFVASLYA.

It belongs to the 30 kDa lipoprotein family. As to expression, detected in larval hemolymph (at protein level).

The protein localises to the secreted. The protein is Low molecular mass lipoprotein 3 of Bombyx mori (Silk moth).